A 671-amino-acid polypeptide reads, in one-letter code: Condensin complex subunit 2 (671 aa).

Residues 1–24 (MDESLTPNPKQKPASTTTRIQAPT) show a composition bias toward polar residues. Disordered stretches follow at residues 1-33 (MDES…GSND), 404-444 (NSWA…KQAE), and 510-564 (RRKN…ISQP). A Kleisin-gamma middle domain (GM domain) involved in chromosome-binding motif is present at residues 406 to 415 (WAGPDHWKYR). The span at 536–556 (VYDDDDGPFDDNENDQSDAED) shows a compositional bias: acidic residues.

This sequence belongs to the CND2 (condensin subunit 2) family. As to quaternary structure, component of the condensin complex. Mostly expressed in flower buds and flowers, and, to a lower extent, in roots, stems, leaves and seedlings.

Its subcellular location is the cytoplasm. The protein resides in the chromosome. Functionally, regulatory subunit of the condensin complex, a complex required for conversion of interphase chromatin into mitotic-like condense chromosomes. The condensin complex probably introduces positive supercoils into relaxed DNA in the presence of type I topoisomerases and converts nicked DNA into positive knotted forms in the presence of type II topoisomerases. Essential protein. In Arabidopsis thaliana (Mouse-ear cress), this protein is Condensin complex subunit 2 (CAPH).